A 137-amino-acid polypeptide reads, in one-letter code: Large ribosomal subunit protein uL16 (137 aa).

It belongs to the universal ribosomal protein uL16 family. Part of the 50S ribosomal subunit.

In terms of biological role, binds 23S rRNA and is also seen to make contacts with the A and possibly P site tRNAs. The protein is Large ribosomal subunit protein uL16 of Alkalilimnicola ehrlichii (strain ATCC BAA-1101 / DSM 17681 / MLHE-1).